Consider the following 226-residue polypeptide: Lipoprotein-releasing system ATP-binding protein LolD (226 aa).

The ABC transporter domain occupies 5-226 (LKATNINKIY…LLRNGHWENY (222 aa)). 41–48 (GTSGSGKS) lines the ATP pocket.

Belongs to the ABC transporter superfamily. Lipoprotein translocase (TC 3.A.1.125) family. In terms of assembly, the complex is composed of two ATP-binding proteins (LolD) and two transmembrane proteins (LolC and LolE).

Its subcellular location is the cell inner membrane. In terms of biological role, part of the ABC transporter complex LolCDE involved in the translocation of mature outer membrane-directed lipoproteins, from the inner membrane to the periplasmic chaperone, LolA. Responsible for the formation of the LolA-lipoprotein complex in an ATP-dependent manner. The polypeptide is Lipoprotein-releasing system ATP-binding protein LolD (Psychrobacter cryohalolentis (strain ATCC BAA-1226 / DSM 17306 / VKM B-2378 / K5)).